The following is a 247-amino-acid chain: Cell division protein ZapD (247 aa).

The protein belongs to the ZapD family. Interacts with FtsZ.

It localises to the cytoplasm. Cell division factor that enhances FtsZ-ring assembly. Directly interacts with FtsZ and promotes bundling of FtsZ protofilaments, with a reduction in FtsZ GTPase activity. This chain is Cell division protein ZapD, found in Salmonella dublin (strain CT_02021853).